Here is a 367-residue protein sequence, read N- to C-terminus: Cis-3-hydroxy-L-proline dehydratase (367 aa).

K165 functions as the Proton donor/acceptor in the catalytic mechanism. Residues D193, E218, and D241 each coordinate Mg(2+). Catalysis depends on K265, which acts as the Proton donor/acceptor.

Belongs to the mandelate racemase/muconate lactonizing enzyme family. Mg(2+) is required as a cofactor.

It carries out the reaction cis-3-hydroxy-L-proline = 1-pyrroline-2-carboxylate + H2O. Its function is as follows. Catalyzes the dehydration of cis-3-hydroxy-L-proline (c3LHyp) to Delta(1)-pyrroline-2-carboxylate (Pyr2C). Is likely involved in a degradation pathway that converts c3LHyp to L-proline, which allows L.aggregata to grow on c3LHyp as a sole carbon source. Also catalyzes the epimerization of c3LHyp to trans-3-hydroxy-D-proline (t3DHyp), a competing reaction occurring from the same enolate anion intermediate. L-proline, t3LHyp, t4LHyp, c4DHyp and their methylated derivatives are not substrates. The sequence is that of Cis-3-hydroxy-L-proline dehydratase from Roseibium aggregatum (strain ATCC 25650 / DSM 13394 / JCM 20685 / NBRC 16684 / NCIMB 2208 / IAM 12614 / B1) (Stappia aggregata).